The following is a 185-amino-acid chain: Large ribosomal subunit protein uL5 (185 aa).

It belongs to the universal ribosomal protein uL5 family. As to quaternary structure, part of the 50S ribosomal subunit; part of the 5S rRNA/L5/L18/L25 subcomplex. Contacts the 5S rRNA and the P site tRNA. Forms a bridge to the 30S subunit in the 70S ribosome.

In terms of biological role, this is one of the proteins that bind and probably mediate the attachment of the 5S RNA into the large ribosomal subunit, where it forms part of the central protuberance. In the 70S ribosome it contacts protein S13 of the 30S subunit (bridge B1b), connecting the 2 subunits; this bridge is implicated in subunit movement. Contacts the P site tRNA; the 5S rRNA and some of its associated proteins might help stabilize positioning of ribosome-bound tRNAs. In Caulobacter vibrioides (strain NA1000 / CB15N) (Caulobacter crescentus), this protein is Large ribosomal subunit protein uL5.